The following is a 301-amino-acid chain: MSWIVNKQSSQEELAGRFRKLMSAPDILQIPGAHDGMAALLAKEAGFSAIYLSGAAYTASRGLPDLGIITSAEIAERAKDLVRAADLPLLVDIDTGFGGVLNAARTAREMLEARVAAVQMEDQQLPKKCGHLNGKQLVPIKEMAQKIKAIKQAAPSLIVVARTDARAQEGLDAAIKRSEAYIEAGADAIFPEALQAENEFRQFAERIPVPLLANMTEFGKTPYYRADEFEDMGFHMVIYPVTSLRAAAKACERMFGLMKEHGSQKEGLHDMQTRKELYDTISYYDYEALDKTIAKTVLPDE.

Substrate is bound at residue 53–55; the sequence is SGA. Aspartate 92 and aspartate 94 together coordinate Mg(2+). Substrate-binding positions include 129–130, arginine 162, glutamate 192, 214–216, arginine 245, and arginine 274; these read CG and NMT.

This sequence belongs to the isocitrate lyase/PEP mutase superfamily. Methylisocitrate lyase family. Mg(2+) is required as a cofactor.

It carries out the reaction 3-hydroxybutane-1,2,3-tricarboxylate = pyruvate + succinate. In terms of biological role, involved in the methylcitric acid cycle. Catalyzes the cleavage of 2-methylisocitrate to yield pyruvate and succinate. The chain is 2-methylisocitrate lyase from Bacillus subtilis (strain 168).